Consider the following 191-residue polypeptide: Small ribosomal subunit protein uS10c (191 aa).

The transit peptide at 1–56 (MAVSTVSSFLLPSFGIPSSSPSSTRLKVSLLPSSSTHGGLSSCVLTKPSVSLTKVF) directs the protein to the chloroplast.

Belongs to the universal ribosomal protein uS10 family. As to quaternary structure, part of the 30S ribosomal subunit.

It localises to the plastid. The protein localises to the chloroplast. This Arabidopsis thaliana (Mouse-ear cress) protein is Small ribosomal subunit protein uS10c (RPS10).